Here is a 202-residue protein sequence, read N- to C-terminus: uncharacterized protein (202 aa).

This is an uncharacterized protein from Escherichia coli (Bacteriophage T4).